A 375-amino-acid chain; its full sequence is Aldehyde reductase FrzD (375 aa).

FMN contacts are provided by Ala61, Gln103, and His171. The active-site Proton donor is the Tyr176. FMN contacts are provided by Lys223, Gly294, and Arg319.

Belongs to the NADH:flavin oxidoreductase/NADH oxidase family. FMN is required as a cofactor.

The enzyme catalyses (1S,4S)-4-[(4-hydroxyphenyl)methyl]-2,5-diazaspiro[bicyclo[3.2.1]octane-6,1'-cyclohexane]-2',5'-dien-4'-one + 2 NADPH + 2 H(+) = (1S,4S)-4-[(4-hydroxyphenyl)methyl]-2,5-diazaspiro[bicyclo[3.2.1]octane-6,1'-cyclohexan]-4'-one + 2 NADP(+). It participates in alkaloid biosynthesis; ergot alkaloid biosynthesis. Aldehyde reductase; part of the gene cluster that mediates the biosynthesis of the alkaloid (-)-FR901483, a potent immunosuppressant that shows efficacy in animal models and a probable inhibitor of purine nucleotide biosynthesis by targeting phosphoribosylpyrophosphate amidotransferase (PPAT). Within the pathway, FrzD reduces the dienone portion of the pathway intermediates to cyclohexanone. The biosynthesis of (-)-FR901483 starts with the condensation of two L-tyrosines to yield (S,S)-dityrosyl-piperazine. This process occurs in 3 steps with the non-canonical nonribosomal peptide synthetase FrzA catalyzing the reduction of L-tyrosine into L-tyrosinal, the spontaneous condensation of 2 L-tyrosinal units, and the subsequent reduction by the NmrA-like family domain-containing oxidoreductase FrzB. The cytochrome P450 monooxygenase FrzC then performs coupling between N10 and C1' to morph the piperazine into a 1,4-diazabicyclo[3.2.1]octane spiro-fused to a 2,5-cyclohexadienone. The dienone portion is further reduced to cyclohexanone by the flavin-dependent reductase FrzD. The methyltranserases (MTs) FrzE and FrzF are then involved in the methylation at the C10' amine and the C4 phenolic oxygen, respectively. The order of the two MTs appear to be interchangeable. Cleavage of the C9-N10' bond by the dioxygenase FrzG then leads to formation of a conjugated iminium. In addition to the oxidation of C9, an additional dehydrogenation between C7 and C8 can occur to give a likely shunt product. The next biosynthetic step is the intramolecular aldol condensation catalyzed by the newly identified aldolase FrzH to yield an aza-tricyclic product with the formation of a C9-C3' bond. The short-chain dehydrogenase/reductase FrzI then produces dephospho-(-)-FR901483 that is phosphorylated at C4'-OH into (-)-FR901483 by the phosphotransferase FrzJ. The only unassigned enzyme in the cluster is the second cytochrome P450 monooxygenase FrzL. In Cladobotryum sp, this protein is Aldehyde reductase FrzD.